Here is a 166-residue protein sequence, read N- to C-terminus: Antibacterial peptide PMAP-36 (166 aa).

The N-terminal stretch at 1-29 is a signal peptide; it reads METQRASLCLGRWSLWLLLLGLVVPSASA. A propeptide spanning residues 30 to 129 is cleaved from the precursor; it reads QALSYREAVL…LDINCDEIQS (100 aa). Intrachain disulfides connect Cys-85/Cys-96 and Cys-107/Cys-124.

It belongs to the cathelicidin family.

It is found in the secreted. Its function is as follows. Exerts antimicrobial activity against both Gram-positive and negative bacteria. Its activity appears to be mediated by its ability to damage bacterial membranes. The polypeptide is Antibacterial peptide PMAP-36 (PMAP36) (Sus scrofa (Pig)).